We begin with the raw amino-acid sequence, 247 residues long: ATP synthase subunit a, chloroplastic (247 aa).

The next 5 membrane-spanning stretches (helical) occupy residues 38-58, 95-115, 134-154, 199-219, and 220-240; these read QVLI…LIAV, VPFI…GALL, INTT…AGLS, LVVV…VMFL, and GLFT…AYIG.

The protein belongs to the ATPase A chain family. F-type ATPases have 2 components, CF(1) - the catalytic core - and CF(0) - the membrane proton channel. CF(1) has five subunits: alpha(3), beta(3), gamma(1), delta(1), epsilon(1). CF(0) has four main subunits: a, b, b' and c.

It localises to the plastid. The protein resides in the chloroplast thylakoid membrane. Functionally, key component of the proton channel; it plays a direct role in the translocation of protons across the membrane. The sequence is that of ATP synthase subunit a, chloroplastic from Brachypodium distachyon (Purple false brome).